We begin with the raw amino-acid sequence, 131 residues long: Small ribosomal subunit protein uS8 (131 aa).

This sequence belongs to the universal ribosomal protein uS8 family. Part of the 30S ribosomal subunit. Contacts proteins S5 and S12.

Functionally, one of the primary rRNA binding proteins, it binds directly to 16S rRNA central domain where it helps coordinate assembly of the platform of the 30S subunit. This Campylobacter lari (strain RM2100 / D67 / ATCC BAA-1060) protein is Small ribosomal subunit protein uS8.